Consider the following 293-residue polypeptide: Autophagy-related protein 36 (293 aa).

Composition is skewed to polar residues over residues 98 to 108 (ISSDSNKNSPP) and 260 to 273 (GETLNRSPSAASSS). Disordered regions lie at residues 98-121 (ISSDSNKNSPPSEQPAPALRNIRS) and 250-273 (SRSRFTDESTGETLNRSPSAASSS).

As to quaternary structure, interacts with PEX3, ATG8 and ATG11.

It is found in the peroxisome. In terms of biological role, required for autophagic breakdown of peroxisomes, called pexophagy, through linking peroxisomes to the autophagy apparatus. Involved in regulation of the glyoxylate cycle. The chain is Autophagy-related protein 36 (ATG36) from Saccharomyces cerevisiae (strain ATCC 204508 / S288c) (Baker's yeast).